Consider the following 256-residue polypeptide: 1-(5-phosphoribosyl)-5-[(5-phosphoribosylamino)methylideneamino] imidazole-4-carboxamide isomerase (256 aa).

Catalysis depends on D8, which acts as the Proton acceptor. D129 (proton donor) is an active-site residue.

Belongs to the HisA/HisF family.

It is found in the cytoplasm. The enzyme catalyses 1-(5-phospho-beta-D-ribosyl)-5-[(5-phospho-beta-D-ribosylamino)methylideneamino]imidazole-4-carboxamide = 5-[(5-phospho-1-deoxy-D-ribulos-1-ylimino)methylamino]-1-(5-phospho-beta-D-ribosyl)imidazole-4-carboxamide. It functions in the pathway amino-acid biosynthesis; L-histidine biosynthesis; L-histidine from 5-phospho-alpha-D-ribose 1-diphosphate: step 4/9. The chain is 1-(5-phosphoribosyl)-5-[(5-phosphoribosylamino)methylideneamino] imidazole-4-carboxamide isomerase from Synechococcus sp. (strain CC9311).